Reading from the N-terminus, the 437-residue chain is MKSNVEKVSNLSRKLNIEVPAAAVQTAFQKIFNGIQKEVTIKGFRKGKAPLATVKSLYGDRVKQDVVQDLIQKHYAEALNEHKLEPISYPEFEFADPTENKDFSFSAAFDVRPEITLKKYEGLEVEKEKAEFDPKKIDQVLENIRASRATFEVVAEDRAVKMGDIAVINFEGFMGGAPLENGSGTDHHLELGAKQFIEGFEDGIVGMKKGETKTLSLKFPDPYHSAELAGKPVEFKVTLNQIKAKVLPELTNEFLATLGGPSDLETLKKSIQEDLEQTETKRIEDAFKNRLLKTLVKENPVEVPPSLMKEQKASLVEDFKKRMSEQGMGPDDFASYVEKWDGDFEKTAAEMIQSSFLVDAIAKKHDLFCKKEDLDAKFAEYAQQTGIEESRIKEFYGRPEQASRLTYMLTEEKVIAFLNKSVKVKEVPAGSLKEENH.

One can recognise a PPIase FKBP-type domain in the interval 163–248 (GDIAVINFEG…LNQIKAKVLP (86 aa)).

Belongs to the FKBP-type PPIase family. Tig subfamily.

It is found in the cytoplasm. The catalysed reaction is [protein]-peptidylproline (omega=180) = [protein]-peptidylproline (omega=0). In terms of biological role, involved in protein export. Acts as a chaperone by maintaining the newly synthesized protein in an open conformation. Functions as a peptidyl-prolyl cis-trans isomerase. The chain is Trigger factor from Bdellovibrio bacteriovorus (strain ATCC 15356 / DSM 50701 / NCIMB 9529 / HD100).